The primary structure comprises 148 residues: UPF0178 protein lpp0103 (148 aa).

It belongs to the UPF0178 family.

The chain is UPF0178 protein lpp0103 from Legionella pneumophila (strain Paris).